The chain runs to 557 residues: Protein Red (557 aa).

Residues methionine 1 to glutamate 90 are disordered. Residues aspartate 16–serine 25 are compositionally biased toward basic and acidic residues. The span at threonine 42–serine 53 shows a compositional bias: low complexity. N6-acetyllysine occurs at positions 98 and 137. Residue lysine 151 forms a Glycyl lysine isopeptide (Lys-Gly) (interchain with G-Cter in SUMO2) linkage. The segment at lysine 181–lysine 205 is disordered. Serine 287 bears the Phosphoserine mark. Basic residues predominate over residues arginine 294–lysine 303. Positions arginine 294 to serine 402 are disordered. Basic and acidic residues predominate over residues glycine 304 to glutamate 313. Glycyl lysine isopeptide (Lys-Gly) (interchain with G-Cter in SUMO2) cross-links involve residues lysine 310 and lysine 331. Basic and acidic residues predominate over residues threonine 332 to lysine 398. Repeat copies occupy residues arginine 342 to glutamate 343, arginine 344 to glutamate 345, arginine 346 to aspartate 347, arginine 348 to glutamate 349, arginine 350 to aspartate 351, arginine 352 to aspartate 353, arginine 354 to glutamate 355, arginine 356 to aspartate 357, arginine 358 to glutamate 359, arginine 360 to aspartate 361, arginine 362 to glutamate 363, arginine 364 to glutamate 365, arginine 366 to glutamate 367, arginine 368 to aspartate 369, arginine 370 to glutamate 371, arginine 372 to glutamate 373, and arginine 374 to glutamate 375. A 17 X 2 AA tandem repeats of R-[ED] region spans residues arginine 342–glutamate 375. Glycyl lysine isopeptide (Lys-Gly) (interchain with G-Cter in SUMO2) cross-links involve residues lysine 386, lysine 388, lysine 404, and lysine 408. Phosphoserine occurs at positions 417 and 460. Phosphothreonine is present on threonine 485. Residues lysine 496, lysine 501, and lysine 509 each participate in a glycyl lysine isopeptide (Lys-Gly) (interchain with G-Cter in SUMO2) cross-link. Serine 536 is modified (phosphoserine). Residues lysine 541, lysine 543, lysine 544, and lysine 553 each participate in a glycyl lysine isopeptide (Lys-Gly) (interchain with G-Cter in SUMO2) cross-link.

It belongs to the RED family. As to quaternary structure, component of the spliceosome B complex. Interacts with SMU1. Interacts with MAD1L1. May interact with DHX15.

The protein localises to the nucleus. It is found in the nucleoplasm. Its subcellular location is the chromosome. The protein resides in the cytoplasm. It localises to the cytoskeleton. The protein localises to the spindle pole. In terms of biological role, involved in pre-mRNA splicing as a component of the spliceosome. Auxiliary spliceosomal protein that regulates selection of alternative splice sites in a small set of target pre-mRNA species. Required for normal mitotic cell cycle progression. Recruits MAD1L1 and MAD2L1 to kinetochores, and is required to trigger the spindle assembly checkpoint. Required for normal accumulation of SMU1. The chain is Protein Red (Ik) from Rattus norvegicus (Rat).